The following is a 658-amino-acid chain: Non-reducing end beta-L-arabinofuranosidase (658 aa).

Beta-L-arabinofuranose-binding positions include His142, 192–194 (DGH), His270, and Glu322. Residue Glu322 is the Proton donor/acceptor of the active site. Residues Glu338, Cys340, Cys417, and Cys418 each contribute to the Zn(2+) site. Cys417 functions as the Nucleophile; S-glycosyl-cysteine intermediate in the catalytic mechanism.

The protein belongs to the glycosyl hydrolase 127 family. Homodimer in solution. It depends on Zn(2+) as a cofactor.

The catalysed reaction is beta-L-arabinofuranosyl-(1-&gt;2)-beta-L-arabinofuranose + H2O = 2 beta-L-arabinofuranose. Its activity is regulated as follows. Strongly inhibited in the presence of thiol modifiers, suggesting a crucial role for cysteine residues in catalysis. Slightly inhibited by EDTA. Functionally, beta-L-arabinofuranosidase that removes the beta-L-arabinofuranose residue from the non-reducing end of various substrates, including beta-L-arabinofuranosyl-hydroxyproline (Ara-Hyp), Ara-beta-1,2-Ara-beta-Hyp (Ara(2)-Hyp), Ara-beta-1,2-Ara-beta-1,2-Ara-beta-Hyp (Ara(3)-Hyp), and beta-L-arabinofuranosyl-(1-&gt;2)-1-O-methyl-beta-L-arabinofuranose. In the presence of 1-alkanols, shows transglycosylation activity, retaining the anomeric configuration of the arabinofuranose residue. The polypeptide is Non-reducing end beta-L-arabinofuranosidase (Bifidobacterium longum subsp. longum (strain ATCC 15707 / DSM 20219 / JCM 1217 / NCTC 11818 / E194b)).